We begin with the raw amino-acid sequence, 424 residues long: UPF0597 protein Sputw3181_2955 (424 aa).

Belongs to the UPF0597 family.

The polypeptide is UPF0597 protein Sputw3181_2955 (Shewanella sp. (strain W3-18-1)).